The sequence spans 210 residues: ATP-dependent dethiobiotin synthetase BioD (210 aa).

An ATP-binding site is contributed by 13–18 (DVGKTV). Residue Thr17 coordinates Mg(2+). The active site involves Lys33. Mg(2+) is bound by residues Arg47 and Glu101. ATP contacts are provided by residues 101–104 (EGAG) and 185–187 (PPL).

This sequence belongs to the dethiobiotin synthetase family. Homodimer. Mg(2+) is required as a cofactor.

It localises to the cytoplasm. It carries out the reaction (7R,8S)-7,8-diammoniononanoate + CO2 + ATP = (4R,5S)-dethiobiotin + ADP + phosphate + 3 H(+). The protein operates within cofactor biosynthesis; biotin biosynthesis; biotin from 7,8-diaminononanoate: step 1/2. Functionally, catalyzes a mechanistically unusual reaction, the ATP-dependent insertion of CO2 between the N7 and N8 nitrogen atoms of 7,8-diaminopelargonic acid (DAPA, also called 7,8-diammoniononanoate) to form a ureido ring. This is ATP-dependent dethiobiotin synthetase BioD from Afipia carboxidovorans (strain ATCC 49405 / DSM 1227 / KCTC 32145 / OM5) (Oligotropha carboxidovorans).